We begin with the raw amino-acid sequence, 458 residues long: NADH-ubiquinone oxidoreductase chain 4 (458 aa).

Helical transmembrane passes span 23 to 43, 59 to 79, 99 to 119, 148 to 168, 174 to 194, 197 to 217, 227 to 247, 260 to 280, 289 to 311, 315 to 337, 355 to 375, 396 to 416, and 438 to 458; these read LLWT…TLTL, IDQF…LTIM, LLIL…LLMF, LYFL…LIMI, SLSI…TPWS, LWWI…IFHL, PIAG…YGMI, LAVP…SICL, IAYS…TPWA, ALAM…NITY, FPLM…LPPF, ILLL…MLIM, and LMLM…AIMI.

The protein belongs to the complex I subunit 4 family.

The protein resides in the mitochondrion membrane. It carries out the reaction a ubiquinone + NADH + 5 H(+)(in) = a ubiquinol + NAD(+) + 4 H(+)(out). Its function is as follows. Core subunit of the mitochondrial membrane respiratory chain NADH dehydrogenase (Complex I) that is believed to belong to the minimal assembly required for catalysis. Complex I functions in the transfer of electrons from NADH to the respiratory chain. The immediate electron acceptor for the enzyme is believed to be ubiquinone. This is NADH-ubiquinone oxidoreductase chain 4 (MT-ND4) from Petromyzon marinus (Sea lamprey).